A 77-amino-acid polypeptide reads, in one-letter code: Antitoxin VapB2 (77 aa).

A SpoVT-AbrB domain is found at 4 to 46 (ASVFMTNRSQAVRLPAEVRFSEEIKKLSVRVSGSDRILSPLNQ).

It belongs to the VapB family. Probably forms a complex with cognate toxin VapC2.

Antitoxin component of a type II toxin-antitoxin (TA) system. Neutralizes the effect of cognate toxin VapC2 but not non-cognate toxin VapC2. This chain is Antitoxin VapB2, found in Haemophilus influenzae (strain 86-028NP).